The following is a 472-amino-acid chain: 2-methylcitrate synthase, mitochondrial (472 aa).

Residues methionine 1–tyrosine 29 constitute a mitochondrion transit peptide. CoA is bound by residues arginine 75 and lysine 193. Residue histidine 271 coordinates oxaloacetate. Leucine 306 lines the CoA pocket. Histidine 307 is an active-site residue. Valine 348, glycine 350, and tyrosine 351 together coordinate CoA. Positions 353 and 362 each coordinate oxaloacetate. Residue histidine 353 is part of the active site. Threonine 402, lysine 403, and asparagine 408 together coordinate CoA. Aspartate 410 is an active-site residue. Arginine 436 and arginine 456 together coordinate oxaloacetate.

Belongs to the citrate synthase family. Homodimer.

Its subcellular location is the mitochondrion matrix. It catalyses the reaction propanoyl-CoA + oxaloacetate + H2O = (2S,3S)-2-methylcitrate + CoA + H(+). It carries out the reaction oxaloacetate + acetyl-CoA + H2O = citrate + CoA + H(+). The protein operates within organic acid metabolism; propanoate degradation. Functionally, component of the methylcitrate cycle that catalyzes the synthesis of (2S,3S)-2-methylcitrate from propionyl-CoA and oxaloacetate. Plays an important role in detoxification of propionyl-CoA, an inhibitor of both primary and secondary metabolism. Also has citrate synthase activity using as substrates acetyl-CoA and oxaloacetate. This is 2-methylcitrate synthase, mitochondrial from Gibberella moniliformis (Maize ear and stalk rot fungus).